Consider the following 164-residue polypeptide: Thiol peroxidase (164 aa).

One can recognise a Thioredoxin domain in the interval Ile-18–Asn-163. Cys-60 (cysteine sulfenic acid (-SOH) intermediate) is an active-site residue. A disulfide bridge links Cys-60 with Cys-93.

It belongs to the peroxiredoxin family. Tpx subfamily. As to quaternary structure, homodimer.

The enzyme catalyses a hydroperoxide + [thioredoxin]-dithiol = an alcohol + [thioredoxin]-disulfide + H2O. Its function is as follows. Thiol-specific peroxidase that catalyzes the reduction of hydrogen peroxide and organic hydroperoxides to water and alcohols, respectively. Plays a role in cell protection against oxidative stress by detoxifying peroxides. The polypeptide is Thiol peroxidase (Staphylococcus aureus (strain Mu50 / ATCC 700699)).